The sequence spans 315 residues: Voltage-dependent calcium channel gamma-3 subunit (315 aa).

A run of 4 helical transmembrane segments spans residues 8–28 (IQML…TIAV), 104–124 (SSVF…CVAA), 135–155 (ILSA…GIIV), and 181–201 (FGAF…HIYI). A disordered region spans residues 232 to 253 (RRRSSSRSTEPRSRDLSPISKG). S248 bears the Phosphoserine mark.

The protein belongs to the PMP-22/EMP/MP20 family. CACNG subfamily. In terms of assembly, the L-type calcium channel is composed of five subunits: alpha-1, alpha-2/delta, beta and gamma. Acts as an auxiliary subunit for AMPA-selective glutamate receptors (AMPARs). Found in a complex with GRIA1, GRIA2, GRIA3, GRIA4, CNIH2, CNIH3, CACNG2, CACNG4, CACNG5, CACNG7 and CACNG8. Interacts with AP4M1 and GRIA1; associates GRIA1 with the adaptor protein complex 4 (AP-4) to target GRIA1 to the somatodendritic compartment of neurons.

Its subcellular location is the membrane. Regulates the trafficking to the somatodendritic compartment and gating properties of AMPA-selective glutamate receptors (AMPARs). Promotes their targeting to the cell membrane and synapses and modulates their gating properties by slowing their rates of activation, deactivation and desensitization. Does not show subunit-specific AMPA receptor regulation and regulates all AMPAR subunits. Thought to stabilize the calcium channel in an inactivated (closed) state. The polypeptide is Voltage-dependent calcium channel gamma-3 subunit (Cacng3) (Mus musculus (Mouse)).